The following is an 808-amino-acid chain: Copal-8-ol diphosphate hydratase, chloroplastic (808 aa).

The transit peptide at 1–50 (MAFTFTSAHLFLPVTENHSVHVNYSIPPGNWRLWSTAKGGSNKLDIRRLR) directs the protein to the chloroplast. Residues 190-219 (DKCQKGLKFFRDNISKLEKENVEASAQMLS) are a coiled coil. Position 256 (Lys256) interacts with substrate. Asp391 and Asp393 together coordinate Mg(2+). The short motif at 391-394 (DLDD) is the DXDD motif element. Lys477 serves as a coordination point for substrate.

This sequence belongs to the terpene synthase family. It depends on Mg(2+) as a cofactor. As to expression, expressed in stems, leaves and trichomes. Not detected in roots and seeds. Higher expression in young leaves than in fully expanded leaves.

It is found in the plastid. Its subcellular location is the chloroplast. The enzyme catalyses (2E,6E,10E)-geranylgeranyl diphosphate + H2O = 8-hydroxycopalyl diphosphate. The protein operates within secondary metabolite biosynthesis; terpenoid biosynthesis. In terms of biological role, involved in the biosynthesis of oxygen-containing labdane-type diterpenes that may be implicated in direct and indirect defense mechanisms. No activity with geranyl diphosphate or farnesyl diphosphate as substrate. This chain is Copal-8-ol diphosphate hydratase, chloroplastic, found in Cistus creticus subsp. creticus (Rock rose).